Here is a 376-residue protein sequence, read N- to C-terminus: Multiphosphoryl transfer protein (376 aa).

Residues 2-142 enclose the PTS EIIA type-2 domain; the sequence is FQLSVQDIHP…EELRALLMGE (141 aa). His62 acts as the Tele-phosphohistidine intermediate; for EIIA activity in catalysis. His62 carries the phosphohistidine; by HPr modification. A m domain region spans residues 156 to 284; that stretch reads TLDVIASSLV…LTSDDALTDD (129 aa). The region spanning 285-375 is the HPr domain; it reads VLSAEFVVRN…DAIAAGLGEG (91 aa). The active-site Pros-phosphohistidine intermediate; for HPr activity is the His299. At His299 the chain carries Phosphohistidine; by EI.

Its subcellular location is the cytoplasm. In terms of biological role, the phosphoenolpyruvate-dependent sugar phosphotransferase system (sugar PTS), a major carbohydrate active transport system, catalyzes the phosphorylation of incoming sugar substrates concomitantly with their translocation across the cell membrane. The enzyme II FruAB PTS system is involved in fructose transport. This is Multiphosphoryl transfer protein (fruB) from Salmonella typhi.